A 505-amino-acid chain; its full sequence is RNA-splicing ligase RtcB homolog (505 aa).

Mn(2+) is bound by residues aspartate 119, cysteine 122, histidine 227, and histidine 259. 226–230 (NHYAE) provides a ligand contact to GMP. At serine 300 the chain carries Phosphoserine. Histidine 353 contributes to the Mn(2+) binding site. GMP contacts are provided by residues 353–354 (HN), 402–405 (GGTM), serine 409, and 428–431 (HGAG). Residue histidine 428 is the GMP-histidine intermediate of the active site. Lysine 496 participates in a covalent cross-link: Glycyl lysine isopeptide (Lys-Gly) (interchain with G-Cter in SUMO2). Lysine 504 provides a ligand contact to GMP.

This sequence belongs to the RtcB family. In terms of assembly, catalytic component of the tRNA-splicing ligase complex. Mn(2+) is required as a cofactor.

It localises to the nucleus. The protein localises to the cytoplasm. It catalyses the reaction a 3'-end 3'-phospho-ribonucleotide-RNA + a 5'-end dephospho-ribonucleoside-RNA + GTP = a ribonucleotidyl-ribonucleotide-RNA + GMP + diphosphate. It carries out the reaction a 3'-end 2',3'-cyclophospho-ribonucleotide-RNA + a 5'-end dephospho-ribonucleoside-RNA + GTP + H2O = a ribonucleotidyl-ribonucleotide-RNA + GMP + diphosphate + H(+). Catalytic subunit of the tRNA-splicing ligase complex that acts by directly joining spliced tRNA halves to mature-sized tRNAs by incorporating the precursor-derived splice junction phosphate into the mature tRNA as a canonical 3',5'-phosphodiester. May act as an RNA ligase with broad substrate specificity, and may function toward other RNAs. The sequence is that of RNA-splicing ligase RtcB homolog from Bos taurus (Bovine).